An 88-amino-acid chain; its full sequence is Three-finger toxin 3FTx-2 (88 aa).

An N-terminal signal peptide occupies residues 1–21 (MKTLLLTLVVVTIVCLDLGNT). Cystine bridges form between Cys-27/Cys-48, Cys-41/Cys-66, Cys-70/Cys-81, and Cys-82/Cys-87.

This sequence belongs to the three-finger toxin family. Ancestral subfamily. Orphan group II sub-subfamily. Expressed by the venom gland.

The protein localises to the secreted. Binds with low affinity to muscular (alpha-1-beta-1-delta-epsilon/CHRNA1-CHRNB1-CHRND-CHRNE) and very low affinity to neuronal (alpha-7/CHRNA7) nicotinic acetylcholine receptor (nAChR). The polypeptide is Three-finger toxin 3FTx-2 (Micrurus corallinus (Brazilian coral snake)).